A 372-amino-acid chain; its full sequence is Ubl carboxyl-terminal hydrolase 18 (372 aa).

Residues 19 to 45 are disordered; it reads SSQSPADLEEKKEEDSNMKREQPRERP. Residues 26–45 show a composition bias toward basic and acidic residues; sequence LEEKKEEDSNMKREQPRERP. The tract at residues 36–51 is mediates interaction with IFNAR2; the sequence is MKREQPRERPRAWDYP. Positions 51–112 are mediates interaction with STAT2; that stretch reads PHGLVGLHNI…MLLLLEKMQD (62 aa). The region spanning 55–370 is the USP domain; sequence VGLHNIGQTC…TAYLLVYMKM (316 aa). Cys-64 acts as the Nucleophile in catalysis. Residues 303–312 form a mediates interaction with STAT2 and necessary for the negative regulation of the type I IFN signaling pathway region; the sequence is ELFAVIAHVG. A mediates interaction with IFNAR2 region spans residues 313–372; that stretch reads MADSGHYCVYIRNAVDGKWFCFNDSNICLVSWEDIQCTYGNPNYHWQETAYLLVYMKMEC. His-318 functions as the Proton acceptor in the catalytic mechanism.

It belongs to the peptidase C19 family. In terms of assembly, interacts with STAT2; the interaction is direct. Interacts with IFNAR2; indirectly via STAT2, it negatively regulates the assembly of the ternary interferon-IFNAR1-IFNAR2 complex and inhibits type I interferon signaling. Interacts with STING1. Interacts with USP20.

The protein localises to the cytoplasm. It localises to the nucleus. It carries out the reaction Thiol-dependent hydrolysis of ester, thioester, amide, peptide and isopeptide bonds formed by the C-terminal Gly of ubiquitin (a 76-residue protein attached to proteins as an intracellular targeting signal).. In terms of biological role, interferon-induced ISG15-specific protease that plays a crucial role for maintaining a proper balance of ISG15-conjugated proteins in cells. Regulates protein ISGylation by efficiently cleaving ISG15 conjugates linked via isopeptide bonds. Regulates T-cell activation and T-helper 17 (Th17) cell differentiation by deubiquitinating TAK1, likely to keep TAK1-TAB complexes in steady conditions. In turn, restricts activation of NF-kappa-B, NFAT, and JNK as well as expression of IL2 in T-cells after TCR activation. Acts as a molecular adapter with USP20 to promote innate antiviral response through deubiquitinating STING1. Involved also in the negative regulation of the inflammatory response triggered by type I interferon. Upon recruitment by STAT2 to the type I interferon receptor subunit IFNAR2 interferes with the assembly of the ternary interferon-IFNAR1-IFNAR2 complex and acts as a negative regulator of the type I interferon signaling pathway. Functionally, has enzymatic activity similar to isoform 1 and interferes with type I interferon signaling. Major deISGylation enzyme for nuclear proteins. The polypeptide is Ubl carboxyl-terminal hydrolase 18 (USP18) (Homo sapiens (Human)).